Here is an 84-residue protein sequence, read N- to C-terminus: Small ribosomal subunit protein bS18 (84 aa).

It belongs to the bacterial ribosomal protein bS18 family. Part of the 30S ribosomal subunit. Forms a tight heterodimer with protein bS6.

Binds as a heterodimer with protein bS6 to the central domain of the 16S rRNA, where it helps stabilize the platform of the 30S subunit. The polypeptide is Small ribosomal subunit protein bS18 (Methylorubrum extorquens (strain CM4 / NCIMB 13688) (Methylobacterium extorquens)).